Here is a 226-residue protein sequence, read N- to C-terminus: NAD(P)H-hydrate epimerase (226 aa).

One can recognise a YjeF N-terminal domain in the interval 10–215; it reads AIELDLDLFE…ALQRKYQLNL (206 aa). A (6S)-NADPHX-binding site is contributed by 58–62; sequence NNGGD. K(+) is bound by residues asparagine 59 and aspartate 123. (6S)-NADPHX is bound by residues 127–133 and aspartate 156; that span reads GFGFKPP. Serine 159 lines the K(+) pocket.

This sequence belongs to the NnrE/AIBP family. K(+) is required as a cofactor.

It carries out the reaction (6R)-NADHX = (6S)-NADHX. The catalysed reaction is (6R)-NADPHX = (6S)-NADPHX. Functionally, catalyzes the epimerization of the S- and R-forms of NAD(P)HX, a damaged form of NAD(P)H that is a result of enzymatic or heat-dependent hydration. This is a prerequisite for the S-specific NAD(P)H-hydrate dehydratase to allow the repair of both epimers of NAD(P)HX. This chain is NAD(P)H-hydrate epimerase, found in Drosophila persimilis (Fruit fly).